A 99-amino-acid chain; its full sequence is CLAVATA3/ESR (CLE)-related protein 11 (99 aa).

An N-terminal signal peptide occupies residues M1–T31. 2 positions are modified to hydroxyproline: P91 and P94. P94 carries O-linked (Ara...) hydroxyproline glycosylation.

This sequence belongs to the CLV3/ESR signal peptide family. The O-glycosylation (arabinosylation) of the hydroxyproline Pro-94 enhances binding affinity of the CLE11p peptide for its receptor. As to expression, mostly expressed in seedlings, roots and siliques, and, to a lower extent, in leaves, flowers, stems and apex.

It is found in the secreted. It localises to the extracellular space. Its function is as follows. Extracellular signal peptide that regulates cell fate. Represses root apical meristem maintenance. Regulates the transition of protophloem cells from proliferation to differentiation, thus impinging on postembryonic growth capacity of the root meristem; this signaling pathway requires CRN and CLV2. This is CLAVATA3/ESR (CLE)-related protein 11 from Arabidopsis thaliana (Mouse-ear cress).